A 1319-amino-acid polypeptide reads, in one-letter code: DNA-directed RNA polymerase subunit beta' (1319 aa).

C59, C61, C74, and C77 together coordinate Zn(2+). Positions 449, 451, and 453 each coordinate Mg(2+). Residues C773, C846, C853, and C856 each coordinate Zn(2+).

It belongs to the RNA polymerase beta' chain family. As to quaternary structure, the RNAP catalytic core consists of 2 alpha, 1 beta, 1 beta' and 1 omega subunit. When a sigma factor is associated with the core the holoenzyme is formed, which can initiate transcription. Mg(2+) serves as cofactor. It depends on Zn(2+) as a cofactor.

It carries out the reaction RNA(n) + a ribonucleoside 5'-triphosphate = RNA(n+1) + diphosphate. Its function is as follows. DNA-dependent RNA polymerase catalyzes the transcription of DNA into RNA using the four ribonucleoside triphosphates as substrates. The polypeptide is DNA-directed RNA polymerase subunit beta' (Fusobacterium nucleatum subsp. nucleatum (strain ATCC 25586 / DSM 15643 / BCRC 10681 / CIP 101130 / JCM 8532 / KCTC 2640 / LMG 13131 / VPI 4355)).